Here is a 288-residue protein sequence, read N- to C-terminus: Formamidopyrimidine-DNA glycosylase (288 aa).

The active-site Schiff-base intermediate with DNA is the P2. E3 serves as the catalytic Proton donor. Residue K59 is the Proton donor; for beta-elimination activity of the active site. H93, R112, and K168 together coordinate DNA. Residues N254 to R288 form an FPG-type zinc finger. Residue R278 is the Proton donor; for delta-elimination activity of the active site.

Belongs to the FPG family. As to quaternary structure, monomer. The cofactor is Zn(2+).

The enzyme catalyses Hydrolysis of DNA containing ring-opened 7-methylguanine residues, releasing 2,6-diamino-4-hydroxy-5-(N-methyl)formamidopyrimidine.. It catalyses the reaction 2'-deoxyribonucleotide-(2'-deoxyribose 5'-phosphate)-2'-deoxyribonucleotide-DNA = a 3'-end 2'-deoxyribonucleotide-(2,3-dehydro-2,3-deoxyribose 5'-phosphate)-DNA + a 5'-end 5'-phospho-2'-deoxyribonucleoside-DNA + H(+). Its function is as follows. Involved in base excision repair of DNA damaged by oxidation or by mutagenic agents. Acts as a DNA glycosylase that recognizes and removes damaged bases. Has a preference for oxidized purines, such as 7,8-dihydro-8-oxoguanine (8-oxoG). Has AP (apurinic/apyrimidinic) lyase activity and introduces nicks in the DNA strand. Cleaves the DNA backbone by beta-delta elimination to generate a single-strand break at the site of the removed base with both 3'- and 5'-phosphates. The protein is Formamidopyrimidine-DNA glycosylase of Corynebacterium jeikeium (strain K411).